A 295-amino-acid chain; its full sequence is Ribosomal RNA small subunit methyltransferase H (295 aa).

S-adenosyl-L-methionine is bound by residues 36–38, Asp-56, Leu-90, Asp-104, and His-111; that span reads GGH.

The protein belongs to the methyltransferase superfamily. RsmH family.

The protein resides in the cytoplasm. The catalysed reaction is cytidine(1402) in 16S rRNA + S-adenosyl-L-methionine = N(4)-methylcytidine(1402) in 16S rRNA + S-adenosyl-L-homocysteine + H(+). Specifically methylates the N4 position of cytidine in position 1402 (C1402) of 16S rRNA. This Dictyoglomus turgidum (strain DSM 6724 / Z-1310) protein is Ribosomal RNA small subunit methyltransferase H.